The sequence spans 595 residues: Cardiolipin synthase (CMP-forming) / mitochondrial hydrolase fusion protein (595 aa).

A mitochondrion-targeting transit peptide spans 1–24; it reads MLHTINYRSWHLAARQLGRSTFRK. The next 2 helical transmembrane spans lie at 538-560 and 564-586; these read ALQL…ASFA and LFYI…RNTF.

It in the N-terminal section; belongs to the HAD-like hydrolase superfamily. In the C-terminal section; belongs to the CDP-alcohol phosphatidyltransferase class-I family. Requires Mg(2+) as cofactor. Post-translationally, proteolytically cleaved, presumably during its import into the mitochondrion by mitochondrial processing peptidase.

It localises to the mitochondrion. The protein localises to the mitochondrion inner membrane. The enzyme catalyses a CDP-1,2-diacyl-sn-glycerol + a 1,2-diacyl-sn-glycero-3-phospho-(1'-sn-glycerol) = a cardiolipin + CMP + H(+). In terms of biological role, catalyzes the synthesis of cardiolipin (CL) (diphosphatidylglycerol) by specifically transferring a phosphatidyl group from CDP-diacylglycerol to phosphatidylglycerol (PG). CL is a key phospholipid in mitochondrial membranes and plays important roles in maintaining the functional integrity and dynamics of mitochondria under both optimal and stress conditions. Functionally, activity is dispensable for viability. The protein is Cardiolipin synthase (CMP-forming) / mitochondrial hydrolase fusion protein of Schizosaccharomyces pombe (strain 972 / ATCC 24843) (Fission yeast).